Here is a 39-residue protein sequence, read N- to C-terminus: uncharacterized protein (39 aa).

This is an uncharacterized protein from Dictyostelium discoideum (Social amoeba).